The following is a 261-amino-acid chain: Triosephosphate isomerase (261 aa).

Substrate is bound at residue 10–12; the sequence is NWK. His-100 serves as the catalytic Electrophile. Glu-172 (proton acceptor) is an active-site residue. Substrate contacts are provided by residues Gly-178, Ser-218, and 239–240; that span reads GG.

Belongs to the triosephosphate isomerase family. In terms of assembly, homodimer.

The protein resides in the cytoplasm. The catalysed reaction is D-glyceraldehyde 3-phosphate = dihydroxyacetone phosphate. It functions in the pathway carbohydrate biosynthesis; gluconeogenesis. The protein operates within carbohydrate degradation; glycolysis; D-glyceraldehyde 3-phosphate from glycerone phosphate: step 1/1. In terms of biological role, involved in the gluconeogenesis. Catalyzes stereospecifically the conversion of dihydroxyacetone phosphate (DHAP) to D-glyceraldehyde-3-phosphate (G3P). The chain is Triosephosphate isomerase from Rhodococcus jostii (strain RHA1).